Reading from the N-terminus, the 580-residue chain is Long-chain-fatty-acid--AMP ligase FadD28 (580 aa).

The segment at 421–440 (SERTFGGKIVTPSPGTPEGP) is disordered.

Belongs to the ATP-dependent AMP-binding enzyme family.

It catalyses the reaction holo-[mycocerosate synthase] + a long-chain fatty acid + ATP = a long-chain fatty acyl-[mycocerosate synthase] + AMP + diphosphate. It carries out the reaction a long-chain fatty acid + ATP + H(+) = a long-chain fatty acyl-AMP + diphosphate. The catalysed reaction is holo-[mycocerosate synthase] + a long-chain fatty acyl-AMP = a long-chain fatty acyl-[mycocerosate synthase] + AMP + H(+). The protein operates within lipid metabolism; fatty acid biosynthesis. In terms of biological role, involved in the biosynthesis of phthiocerol dimycocerosate (PDIM), a cell wall-associated lipid found only in pathogenic mycobacteria. Catalyzes the activation of long-chain fatty acids as acyl-adenylates (acyl-AMP), which are then transferred to the multifunctional polyketide synthase Mas for further chain extension. This Mycobacterium bovis (strain ATCC BAA-935 / AF2122/97) protein is Long-chain-fatty-acid--AMP ligase FadD28 (fadD28).